The sequence spans 112 residues: Colipase (112 aa).

The signal sequence occupies residues 1–17 (MEKILVLLLVALAVVYA). Positions 18–22 (VPDPR) are cleaved as a propeptide — enterostatin, activation peptide. 5 cysteine pairs are disulfide-bonded: C34/C45, C40/C56, C44/C78, C66/C86, and C80/C104.

It belongs to the colipase family. As to quaternary structure, forms a 1:1 stoichiometric complex with pancreatic lipase. Expressed by the pancreas.

Its subcellular location is the secreted. Colipase is a cofactor of pancreatic lipase. It allows the lipase to anchor itself to the lipid-water interface. Without colipase the enzyme is washed off by bile salts, which have an inhibitory effect on the lipase. In terms of biological role, enterostatin has a biological activity as a satiety signal. This chain is Colipase (CLPS), found in Canis lupus familiaris (Dog).